The following is a 70-amino-acid chain: UPF0519 protein B (70 aa).

It belongs to the UPF0519 family.

The protein is UPF0519 protein B (sigN122) of Dictyostelium discoideum (Social amoeba).